Reading from the N-terminus, the 149-residue chain is Nucleoside diphosphate kinase (149 aa).

6 residues coordinate ATP: Lys-11, Phe-59, Arg-87, Thr-93, Arg-104, and Asn-114. The active-site Pros-phosphohistidine intermediate is His-117.

This sequence belongs to the NDK family. In terms of assembly, homotetramer. Mg(2+) serves as cofactor.

The protein resides in the cytoplasm. The enzyme catalyses a 2'-deoxyribonucleoside 5'-diphosphate + ATP = a 2'-deoxyribonucleoside 5'-triphosphate + ADP. It catalyses the reaction a ribonucleoside 5'-diphosphate + ATP = a ribonucleoside 5'-triphosphate + ADP. Functionally, major role in the synthesis of nucleoside triphosphates other than ATP. The ATP gamma phosphate is transferred to the NDP beta phosphate via a ping-pong mechanism, using a phosphorylated active-site intermediate. The sequence is that of Nucleoside diphosphate kinase from Treponema pallidum (strain Nichols).